The primary structure comprises 157 residues: MAAADVEYRCFVGGLAWATSNESLENAFASYGEILDSKVITDRETGRSRGFGFVTFSSENSMLDAIENMNGKELDGRNITVNQAQSRGGGGGGGGYGGGRGGGGYGGGRRDGGYGGGGGYGGRREGGGGGYGGGGGYGGRREGGGGGYGGGGGGWRD.

The region spanning 8–86 (YRCFVGGLAW…RNITVNQAQS (79 aa)) is the RRM domain. Residues 82–157 (NQAQSRGGGG…YGGGGGGWRD (76 aa)) are disordered. Over residues 87 to 157 (RGGGGGGGGY…YGGGGGGWRD (71 aa)) the composition is skewed to gly residues.

Functionally, possibly has a role in RNA transcription or processing during stress. The protein is Glycine-rich RNA-binding, abscisic acid-inducible protein (RAB15) of Zea mays (Maize).